A 123-amino-acid polypeptide reads, in one-letter code: Small ribosomal subunit protein uS12c (123 aa).

This sequence belongs to the universal ribosomal protein uS12 family. As to quaternary structure, part of the 30S ribosomal subunit.

The protein localises to the plastid. Its subcellular location is the chloroplast. In terms of biological role, with S4 and S5 plays an important role in translational accuracy. Located at the interface of the 30S and 50S subunits. This chain is Small ribosomal subunit protein uS12c (rps12), found in Chlorokybus atmophyticus (Soil alga).